Reading from the N-terminus, the 453-residue chain is Homogentisate 1,2-dioxygenase (453 aa).

Catalysis depends on His304, which acts as the Proton acceptor. Fe cation is bound by residues His347 and Glu353. Positions 362 and 383 each coordinate homogentisate. His383 is a binding site for Fe cation.

The protein belongs to the homogentisate dioxygenase family. As to quaternary structure, hexamer; dimer of trimers. Fe cation serves as cofactor.

The catalysed reaction is homogentisate + O2 = 4-maleylacetoacetate + H(+). It functions in the pathway amino-acid degradation; L-phenylalanine degradation; acetoacetate and fumarate from L-phenylalanine: step 4/6. Functionally, involved in the catabolism of homogentisate (2,5-dihydroxyphenylacetate or 2,5-OH-PhAc), a central intermediate in the degradation of phenylalanine and tyrosine. Catalyzes the oxidative ring cleavage of the aromatic ring of homogentisate to yield maleylacetoacetate. The chain is Homogentisate 1,2-dioxygenase from Sinorhizobium fredii (strain NBRC 101917 / NGR234).